The sequence spans 406 residues: Dematin (406 aa).

Disordered stretches follow at residues 1–30 (MERL…PSSI) and 78–333 (LPRS…DRGN). Residues 11–29 (SPGSVSSSRDSSVPGSPSS) are compositionally biased toward low complexity. 10 positions are modified to phosphoserine: Ser-16, Ser-18, Ser-26, Ser-92, Ser-96, Ser-105, Ser-110, Ser-113, Ser-157, and Ser-227. Residues 105-114 (SPGTISQASA) show a composition bias toward polar residues. Over residues 217–228 (EEEEEEEDDDSG) the composition is skewed to acidic residues. Residues 225–309 (DDSGEEMKAL…SRLQSTDFSP (85 aa)) are interaction with RASGRF2. Composition is skewed to basic and acidic residues over residues 229–243 (EEMK…EELS) and 253–262 (ILKEEMEKSL). Ser-270, Ser-280, Ser-290, Ser-304, Ser-316, Ser-334, Ser-373, and Ser-384 each carry phosphoserine. Over residues 282–323 (HAGTSKSSSLPAYGRTTLSRLQSTDFSPSGSEAESPGLQNGE) the composition is skewed to polar residues. Positions 338 to 406 (VLEQKIYPYE…NELKKKASLF (69 aa)) constitute an HP domain. At Ser-404 the chain carries Phosphoserine; by PKA.

This sequence belongs to the villin/gelsolin family. As to quaternary structure, monomeric; under reducing conditions. Self-associates. Exists under oxidizing condition as a trimer linked by disulfide bonds. Found in a complex with DMTN, F-actin and spectrin. Found in a complex with ADD2, DMTN and SLC2A1. Interacts with F-actin, ITPKB and spectrin. Interacts with SLC2A1 (via C-terminus cytoplasmic region). Interacts with RASGRF2. Phosphorylated. Phosphorylation at Ser-404 by PKA causes the C-terminal headpiece domain to associate with the N-terminal core domain, and leads to the inhibition of its actin bundling activity.

Its subcellular location is the cytoplasm. It localises to the cytosol. It is found in the perinuclear region. The protein resides in the cytoskeleton. The protein localises to the cell membrane. Its subcellular location is the membrane. It localises to the endomembrane system. It is found in the cell projection. Functionally, membrane-cytoskeleton-associated protein with F-actin-binding activity that induces F-actin bundles formation and stabilization. Its F-actin-bundling activity is reversibly regulated upon its phosphorylation by the cAMP-dependent protein kinase A (PKA). Binds to the erythrocyte membrane glucose transporter-1 SLC2A1/GLUT1, and hence stabilizes and attaches the spectrin-actin network to the erythrocytic plasma membrane. Plays a role in maintaining the functional integrity of PKA-activated erythrocyte shape and the membrane mechanical properties. Also plays a role as a modulator of actin dynamics in fibroblasts; acts as a negative regulator of the RhoA activation pathway. In platelets, functions as a regulator of internal calcium mobilization across the dense tubular system that affects platelet granule secretion pathways and aggregation. Also required for the formation of a diverse set of cell protrusions, such as filopodia and lamellipodia, necessary for platelet cell spreading, motility and migration. Acts as a tumor suppressor and inhibits malignant cell transformation. The polypeptide is Dematin (DMTN) (Bos taurus (Bovine)).